The sequence spans 152 residues: MTSLVYFSSASENTHRFVQKLGVPATRIPLHDRAGTFEVDEPYVLILPTYGGGITATGRDTSYVPKQVIRFLNNTHNRSLIRGVIAAGNTNFGESYCYAGNVISQKCRVPYLYRFELMGTAEDVVAVLDGLEQFMESEQWHRQSQTQPRLGV.

It belongs to the NrdI family.

Functionally, probably involved in ribonucleotide reductase function. The chain is Protein NrdI from Rhodococcus opacus (strain B4).